A 373-amino-acid polypeptide reads, in one-letter code: Acyl-CoA dehydrogenase FadE27 (373 aa).

Residues arginine 251, histidine 327, and glycine 331 each contribute to the FAD site.

The protein belongs to the acyl-CoA dehydrogenase family. As to quaternary structure, heterotetramer (dimer of heterodimers) composed of FadE26 and FadE27. FAD serves as cofactor.

The enzyme catalyses (25S)-3-oxocholest-4-en-26-oyl-CoA + A = 3-oxo-cholest-4,24-dien-26-oyl-CoA + AH2. It functions in the pathway steroid metabolism; cholesterol degradation. Uncompetitively inhibited by high concentration of 3-OCS-CoA. Functionally, involved in the first cycle of side chain dehydrogenation in the beta-oxidation of cholesterol catabolism. It contributes partly to the virulence by increasing the efficiency of beta-oxidation. Catalyzes the dehydrogenation of acyl-CoA ester side chains of (25S)-3-oxo-cholest-4-en-26-oyl-CoA (3-OCS-CoA) to yield (24E)-3-oxo-cholest-4,24-dien-26-oyl-CoA. Also able to dehydrogenate steroyl-CoA such as 3-oxo-chol-4-en-24-oyl-CoA (3-OCO-CoA) as well as 3-oxo-4-pregnene-20-carboxyl-CoA (3-OPC-CoA). It dehydrogenates only (25S)-OCS-CoA diastereomer. The polypeptide is Acyl-CoA dehydrogenase FadE27 (fadE27) (Mycobacterium tuberculosis (strain ATCC 25618 / H37Rv)).